Here is a 60-residue protein sequence, read N- to C-terminus: Large ribosomal subunit protein uL30 (60 aa).

Belongs to the universal ribosomal protein uL30 family. Part of the 50S ribosomal subunit.

In Cupriavidus necator (strain ATCC 17699 / DSM 428 / KCTC 22496 / NCIMB 10442 / H16 / Stanier 337) (Ralstonia eutropha), this protein is Large ribosomal subunit protein uL30.